We begin with the raw amino-acid sequence, 92 residues long: UPF0223 protein SERP0684 (92 aa).

Belongs to the UPF0223 family.

The polypeptide is UPF0223 protein SERP0684 (Staphylococcus epidermidis (strain ATCC 35984 / DSM 28319 / BCRC 17069 / CCUG 31568 / BM 3577 / RP62A)).